We begin with the raw amino-acid sequence, 374 residues long: Queuine tRNA-ribosyltransferase (374 aa).

Asp89 serves as the catalytic Proton acceptor. Substrate contacts are provided by residues Asp89–Phe93, Asp143, Gln187, and Gly214. An RNA binding region spans residues Gly245–Asp251. Asp264 (nucleophile) is an active-site residue. The interval Thr269 to Arg273 is RNA binding; important for wobble base 34 recognition. Cys302, Cys304, Cys307, and His333 together coordinate Zn(2+).

The protein belongs to the queuine tRNA-ribosyltransferase family. As to quaternary structure, homodimer. Within each dimer, one monomer is responsible for RNA recognition and catalysis, while the other monomer binds to the replacement base PreQ1. Zn(2+) serves as cofactor.

The enzyme catalyses 7-aminomethyl-7-carbaguanine + guanosine(34) in tRNA = 7-aminomethyl-7-carbaguanosine(34) in tRNA + guanine. It functions in the pathway tRNA modification; tRNA-queuosine biosynthesis. Its function is as follows. Catalyzes the base-exchange of a guanine (G) residue with the queuine precursor 7-aminomethyl-7-deazaguanine (PreQ1) at position 34 (anticodon wobble position) in tRNAs with GU(N) anticodons (tRNA-Asp, -Asn, -His and -Tyr). Catalysis occurs through a double-displacement mechanism. The nucleophile active site attacks the C1' of nucleotide 34 to detach the guanine base from the RNA, forming a covalent enzyme-RNA intermediate. The proton acceptor active site deprotonates the incoming PreQ1, allowing a nucleophilic attack on the C1' of the ribose to form the product. After dissociation, two additional enzymatic reactions on the tRNA convert PreQ1 to queuine (Q), resulting in the hypermodified nucleoside queuosine (7-(((4,5-cis-dihydroxy-2-cyclopenten-1-yl)amino)methyl)-7-deazaguanosine). This is Queuine tRNA-ribosyltransferase from Shewanella baltica (strain OS185).